A 169-amino-acid chain; its full sequence is Histone H1.9 (169 aa).

2 stretches are compositionally biased toward polar residues: residues 1-10 (MSLVSPSPDS) and 19-36 (DAST…IGPN). The interval 1–36 (MSLVSPSPDSNAVMAGDQDASTSQVPSQSESKIGPN) is disordered. The H15 domain maps to 43–116 (RKPTMSKVIL…GASGSFRLGK (74 aa)). Serine 62 and serine 65 each carry phosphoserine. The span at 118-142 (QAFKSKCKAKRRQRRQKPGQRRTGS) shows a compositional bias: basic residues. The tract at residues 118 to 154 (QAFKSKCKAKRRQRRQKPGQRRTGSRRSLLGSKKSNN) is disordered.

This sequence belongs to the histone H1/H5 family.

It is found in the nucleus. Its subcellular location is the chromosome. Its function is as follows. DNA-binding protein that may be implicated in chromatin remodeling and/or transcriptional regulation during spermiogenesis, the process of spermatid maturation into spermatozoa. This Rattus norvegicus (Rat) protein is Histone H1.9.